Here is a 209-residue protein sequence, read N- to C-terminus: Thymidylate kinase (209 aa).

10-17 (GPDGAGKT) serves as a coordination point for ATP.

This sequence belongs to the thymidylate kinase family.

It catalyses the reaction dTMP + ATP = dTDP + ADP. In terms of biological role, phosphorylation of dTMP to form dTDP in both de novo and salvage pathways of dTTP synthesis. The chain is Thymidylate kinase from Pediococcus pentosaceus (strain ATCC 25745 / CCUG 21536 / LMG 10740 / 183-1w).